Consider the following 390-residue polypeptide: DNA replication and repair protein RecF (390 aa).

Residue 30–37 participates in ATP binding; sequence GDNAQGKS.

This sequence belongs to the RecF family.

Its subcellular location is the cytoplasm. Functionally, the RecF protein is involved in DNA metabolism; it is required for DNA replication and normal SOS inducibility. RecF binds preferentially to single-stranded, linear DNA. It also seems to bind ATP. This Trichodesmium erythraeum (strain IMS101) protein is DNA replication and repair protein RecF.